A 255-amino-acid chain; its full sequence is Protein NEN4 (255 aa).

Residues 11-174 enclose the Exonuclease domain; it reads VFFDLETNVP…DDVRMNLEVL (164 aa). The Mg(2+) site is built by aspartate 14 and glutamate 16. The active-site Proton donor/acceptor is the histidine 161. Residue aspartate 166 participates in Mg(2+) binding.

Mg(2+) is required as a cofactor. Expressed in the sieve elements and phloem pole pericycle cells.

The protein localises to the nucleus. Functionally, probable exonuclease required for enuclation of sieve elements. The protein is Protein NEN4 of Arabidopsis thaliana (Mouse-ear cress).